Here is a 448-residue protein sequence, read N- to C-terminus: tRNA(Ile)-lysidine synthase (448 aa).

25-30 serves as a coordination point for ATP; sequence SGGSDS.

It belongs to the tRNA(Ile)-lysidine synthase family.

The protein resides in the cytoplasm. It carries out the reaction cytidine(34) in tRNA(Ile2) + L-lysine + ATP = lysidine(34) in tRNA(Ile2) + AMP + diphosphate + H(+). Ligates lysine onto the cytidine present at position 34 of the AUA codon-specific tRNA(Ile) that contains the anticodon CAU, in an ATP-dependent manner. Cytidine is converted to lysidine, thus changing the amino acid specificity of the tRNA from methionine to isoleucine. The protein is tRNA(Ile)-lysidine synthase of Brucella abortus (strain S19).